We begin with the raw amino-acid sequence, 207 residues long: Histone H1-like protein HC2 (207 aa).

Basic residues-rich tracts occupy residues 1–50 (MLGV…KTVA) and 59–72 (PAAKKTAAKKAPVR). The interval 1-72 (MLGVQKKRST…KTAAKKAPVR (72 aa)) is disordered. 3 consecutive repeat copies span residues 35-58 (VRKVAAKKTVARKTVAKKAVAARK), 71-94 (VRKVAAKKTVARKTVAKKAVAARK), and 113-136 (VRKVAAKKTVARKTVAKKAVAARK). A 3 X 24 AA repeats of V-R-K-V-A-A-K-K-T-V-A-R-K-T-V-A-K-K-A-V-A-A-R-K region spans residues 35–136 (VRKVAAKKTV…VAKKAVAARK (102 aa)).

It belongs to the histone H1/H5 family. HCT subfamily.

Functionally, might have a role in establishing the nucleoid structure of elementary bodies. This is Histone H1-like protein HC2 (hctB) from Chlamydia muridarum (strain MoPn / Nigg).